Here is a 630-residue protein sequence, read N- to C-terminus: Amino acid transporter heavy chain SLC3A2 (630 aa).

The residue at position 1 (Met-1) is an N-acetylmethionine. Glu-2 is subject to N-acetylserine. Glu-2 carries the phosphoserine modification. The disordered stretch occupies residues 15–39 (IPRQLPGSHSEAGVQGLSAGDDSEL). The Cytoplasmic segment spans residues 102–184 (MSQDTEVDMK…SPGWVRTRWA (83 aa)). Residue Ser-103 is modified to Phosphoserine. Thr-106 carries the post-translational modification Phosphothreonine. A Phosphoserine modification is found at Ser-134. Residue Lys-147 forms a Glycyl lysine isopeptide (Lys-Gly) (interchain with G-Cter in ubiquitin) linkage. A Phosphoserine modification is found at Ser-165. Lys-166 is covalently cross-linked (Glycyl lysine isopeptide (Lys-Gly) (interchain with G-Cter in SUMO2)). A helical; Signal-anchor for type II membrane protein transmembrane segment spans residues 185–205 (LLLLFWLGWLGMLAGAVVIIV). Topologically, residues 206–630 (RAPRCRELPA…GLLLRFPYAA (425 aa)) are extracellular. 2 N-linked (GlcNAc...) asparagine glycosylation sites follow: Asn-365 and Asn-381. Residues Ser-406, Ser-408, and Ser-410 each carry the phosphoserine modification. The N-linked (GlcNAc...) (complex) asparagine glycan is linked to Asn-424. N-linked (GlcNAc...) asparagine glycosylation occurs at Asn-506. A phosphoserine mark is found at Ser-527 and Ser-531.

Disulfide-linked heterodimer with a non-glycosylated catalytic light subunit (SLC7A5, SLC7A6, SLC7A7, SLC7A8, SLC7A10 or SLC7A11). Interacts with TLCD3A/CT120. Interacts with ICAM1. Constitutively and specifically associates with beta-1 integrins (alpha-2/beta-1, alpha-3/beta-1, alpha-5/beta-1 and alpha-6/beta-1), but minimally with alpha-4/beta-1. Interacts with LAPTM4B; recruits SLC3A2 and SLC7A5/LAT1 to lysosomes to promote leucine uptake into these organelles and is required for mTORC1 activation. In terms of assembly, (Microbial infection) Interacts with hepatitis C virus/HCV envelope glycoprotein E2; the interaction may facilitate viral entry into host cell. N-glycosylated; N-glycosylation is crucial for trafficking and stability of SLC3A2 to the plasma membrane. In terms of processing, phosphorylation on Ser-406; Ser-408 or Ser-410 and on Ser-527 or Ser-531 by ecto-protein kinases favors heterotypic cell-cell interactions. As to expression, expressed ubiquitously in all tissues tested with highest levels detected in kidney, placenta and testis and weakest level in thymus. During gestation, expression in the placenta was significantly stronger at full-term than at the mid-trimester stage. Expressed in HUVECS and at low levels in resting peripheral blood T-lymphocytes and quiescent fibroblasts. Also expressed in fetal liver and in the astrocytic process of primary astrocytic gliomas. Expressed in retinal endothelial cells and in the intestinal epithelial cell line C2BBe1.

The protein resides in the apical cell membrane. It is found in the cell membrane. It localises to the cell junction. Its subcellular location is the lysosome membrane. The protein localises to the melanosome. The protein resides in the basolateral cell membrane. Acts as a chaperone that facilitates biogenesis and trafficking of functional transporters heterodimers to the plasma membrane. Forms heterodimer with SLC7 family transporters (SLC7A5, SLC7A6, SLC7A7, SLC7A8, SLC7A10 and SLC7A11), a group of amino-acid antiporters. Heterodimers function as amino acids exchangers, the specificity of the substrate depending on the SLC7A subunit. Heterodimers SLC3A2/SLC7A6 or SLC3A2/SLC7A7 mediate the uptake of dibasic amino acids. Heterodimer SLC3A2/SLC7A11 functions as an antiporter by mediating the exchange of extracellular anionic L-cystine and intracellular L-glutamate across the cellular plasma membrane. SLC3A2/SLC7A10 translocates small neutral L- and D-amino acids across the plasma membrane. SLC3A2/SLC75 or SLC3A2/SLC7A8 translocates neutral amino acids with broad specificity, thyroid hormones and L-DOPA. SLC3A2 is essential for plasma membrane localization, stability, and the transport activity of SLC7A5 and SLC7A8. When associated with LAPTM4B, the heterodimer SLC7A5 is recruited to lysosomes to promote leucine uptake into these organelles, and thereby mediates mTORC1 activation. Modulates integrin-related signaling and is essential for integrin-dependent cell spreading, migration and tumor progression. In terms of biological role, (Microbial infection) In case of hepatitis C virus/HCV infection, the complex formed by SLC3A2 and SLC7A5/LAT1 plays a role in HCV propagation by facilitating viral entry into host cell and increasing L-leucine uptake-mediated mTORC1 signaling activation, thereby contributing to HCV-mediated pathogenesis. Its function is as follows. (Microbial infection) Acts as a receptor for malaria parasite Plasmodium vivax (Thai isolate) in immature red blood cells. In Homo sapiens (Human), this protein is Amino acid transporter heavy chain SLC3A2.